The sequence spans 524 residues: Zinc finger protein 346 (524 aa).

7 consecutive Matrin-type zinc fingers follow at residues 34 to 64, 92 to 126, 162 to 192, 226 to 260, 286 to 316, 343 to 373, and 400 to 430; these read TQCK…KVRR, DRSK…LRLR, KFCK…QETK, GKGF…LMSM, FSCD…HLKS, FSCD…HLMS, and FSCD…QLMS. Zn(2+) is bound by residues C36, C39, H52, H58, C97, C100, H113, and H119. Disordered regions lie at residues 453-486 and 494-513; these read SAGG…GSLP and PLYP…TMSP. Low complexity predominate over residues 476 to 486; sequence PKGPSSFGSLP.

The protein localises to the nucleus. The protein resides in the cytoplasm. Binds preferentially to dsRNA, but also to RNA-DNA hybrids. This Xenopus laevis (African clawed frog) protein is Zinc finger protein 346.